Here is a 567-residue protein sequence, read N- to C-terminus: MSSRLGAVPATPGPTPFKQQRSTRIVGAKNSRTQCSIKDNSFQYTIPHDDSLSGSSSASSCEPVSDFPASFRKSTYWMKMRRIKSAAASHVEGPGGVSTKGKRKPRQEEDEDYREFPQKKHKLYGRKQRPKAQPNPKAQTRRIRKEPPAYAAGSLEEQWYLEIVDKGSVSCPTCQAVGRKTIEGLKKHMENCKQEMFTCHHCGKQLRSLAGMKYHVMANHNSLPILKAGDEIDEPSERERLRTVLKRLGKLRCMRESCSSSFTSIMGYLYHVRKCGKGAAELEKMTLKCHHCGKPYRSKAGLAYHLRSEHGPISFFPESGQPECLKDMSLESKSGGRVQRRSAKIAVYHLQELASAELAKEWPKRKVLQDLVPDDRKLKYTRPGLPTFSQEVLHKWKSDIKKYHRIQCPNQGCEAVYSSVSGLKAHLGSCTLGTFVAGKYKCLLCQKEFVSESGVKYHINSVHAEDWFVVNPTTTKSFEKLMKIKQRQQEEEKRRQQHRSRRSLRRRQQPGIELPETEPSLRVGKDQRRNHEELLVATSRKEPEQEPVPTQFQKVRSPKTNHKRGKK.

The disordered stretch occupies residues 1–34 (MSSRLGAVPATPGPTPFKQQRSTRIVGAKNSRTQ). Residues Lys18 and Lys84 each participate in a glycyl lysine isopeptide (Lys-Gly) (interchain with G-Cter in SUMO2) cross-link. The tract at residues 87-148 (AASHVEGPGG…QTRRIRKEPP (62 aa)) is disordered. The segment covering 119 to 130 (KKHKLYGRKQRP) has biased composition (basic residues). Residues 197-220 (FTCHHCGKQLRSLAGMKYHVMANH) form a C2H2-type 1 zinc finger. Lys227 is covalently cross-linked (Glycyl lysine isopeptide (Lys-Gly) (interchain with G-Cter in SUMO2)). The C2H2-type 2 zinc finger occupies 287–310 (LKCHHCGKPYRSKAGLAYHLRSEH). Residue Lys333 forms a Glycyl lysine isopeptide (Lys-Gly) (interchain with G-Cter in SUMO2) linkage. The segment at 406–430 (IQCPNQGCEAVYSSVSGLKAHLGSC) adopts a C2H2-type 3; atypical zinc-finger fold. A C2H2-type 3 zinc finger spans residues 440-463 (YKCLLCQKEFVSESGVKYHINSVH). Residues 485–494 (KQRQQEEEKR) show a composition bias toward basic and acidic residues. Residues 485 to 567 (KQRQQEEEKR…PKTNHKRGKK (83 aa)) are disordered. A compositionally biased stretch (basic residues) spans 495-508 (RQQHRSRRSLRRRQ). Basic and acidic residues predominate over residues 523-544 (VGKDQRRNHEELLVATSRKEPE). The span at 556–567 (RSPKTNHKRGKK) shows a compositional bias: basic residues.

The protein belongs to the krueppel C2H2-type zinc-finger protein family.

Its subcellular location is the nucleus. In terms of biological role, may be involved in transcriptional regulation. The polypeptide is Zinc finger protein 512 (ZNF512) (Bos taurus (Bovine)).